The chain runs to 445 residues: MKHFEANFDGLVGPTHNYAGLSFGNVASLNNAAATSSPKDAAKQGLKKAKALADLGLVQGMLAPQERPDLHTLRRIGFSGTDAEILNKAAKEAPALLRACCSASSMWTANAATVSPSADTHDGKLHFTPANLVDKLHRSIEPTTTGNILQATFNDSRYFKHHQHLPEHTSFGDEGAANHTRLCSEYGHAGVELFVYGQEATNPSAPKPQKFPARQTLEASQAVARLHQLDDNGTVYIQQNPDVIDQGVFHNDVIAVGNQNVLFYHEQAFLNTQAKLTEIKNKFGDSALHFVEVPTSQVAIQDAVKSYLFNTQVVTLPSGEMAIIAPTNCQENPAVFAYLNELVTLDTPIKQVLYFDVKQSMQNGGGPACLRLRVAMNQDEVAAVNQHTLMNDALFTRLNQWVDKHYRDRLLVEDLADPQLVIESRTALDELTQIMKLGSVYQFQR.

Residues 19-28, Asn-110, and 137-138 contribute to the substrate site; these read AGLSFGNVAS and HR. Glu-174 is a catalytic residue. Arg-214 contacts substrate. His-250 is a catalytic residue. Substrate-binding residues include Asp-252 and Asn-363. Cys-369 serves as the catalytic Nucleophile.

Belongs to the succinylarginine dihydrolase family. Homodimer.

It carries out the reaction N(2)-succinyl-L-arginine + 2 H2O + 2 H(+) = N(2)-succinyl-L-ornithine + 2 NH4(+) + CO2. The protein operates within amino-acid degradation; L-arginine degradation via AST pathway; L-glutamate and succinate from L-arginine: step 2/5. In terms of biological role, catalyzes the hydrolysis of N(2)-succinylarginine into N(2)-succinylornithine, ammonia and CO(2). The polypeptide is N-succinylarginine dihydrolase (Shewanella pealeana (strain ATCC 700345 / ANG-SQ1)).